We begin with the raw amino-acid sequence, 359 residues long: Histidinol-phosphate aminotransferase (359 aa).

The residue at position 217 (Lys217) is an N6-(pyridoxal phosphate)lysine.

Belongs to the class-II pyridoxal-phosphate-dependent aminotransferase family. Histidinol-phosphate aminotransferase subfamily. Homodimer. Pyridoxal 5'-phosphate is required as a cofactor.

The catalysed reaction is L-histidinol phosphate + 2-oxoglutarate = 3-(imidazol-4-yl)-2-oxopropyl phosphate + L-glutamate. It participates in amino-acid biosynthesis; L-histidine biosynthesis; L-histidine from 5-phospho-alpha-D-ribose 1-diphosphate: step 7/9. The sequence is that of Histidinol-phosphate aminotransferase from Salmonella paratyphi A (strain ATCC 9150 / SARB42).